We begin with the raw amino-acid sequence, 279 residues long: UPF0173 metal-dependent hydrolase MXAN_1394 (279 aa).

It belongs to the UPF0173 family.

This is UPF0173 metal-dependent hydrolase MXAN_1394 from Myxococcus xanthus (strain DK1622).